The sequence spans 408 residues: Protein trichome birefringence-like 14 (408 aa).

The helical; Signal-anchor for type II membrane protein transmembrane segment at 11 to 31 threads the bilayer; the sequence is GSVSLALIVLILLVIILLVSE. Positions 131 to 133 match the GDS motif motif; it reads GDS. The DCXHWCLPGXXDXWN motif motif lies at 387–401; the sequence is DCLHWCLPGIPDTWN.

The protein belongs to the PC-esterase family. TBL subfamily.

It is found in the membrane. Its function is as follows. May act as a bridging protein that binds pectin and other cell wall polysaccharides. Probably involved in maintaining esterification of pectins. May be involved in the specific O-acetylation of cell wall polymers. This is Protein trichome birefringence-like 14 (TBL14) from Arabidopsis thaliana (Mouse-ear cress).